We begin with the raw amino-acid sequence, 216 residues long: Ribosomal RNA small subunit methyltransferase G (216 aa).

S-adenosyl-L-methionine-binding positions include Gly83, Met88, 134–135, and Arg149; that span reads VE.

The protein belongs to the methyltransferase superfamily. RNA methyltransferase RsmG family.

Its subcellular location is the cytoplasm. It catalyses the reaction guanosine(527) in 16S rRNA + S-adenosyl-L-methionine = N(7)-methylguanosine(527) in 16S rRNA + S-adenosyl-L-homocysteine. Its function is as follows. Specifically methylates the N7 position of guanine in position 527 of 16S rRNA. The protein is Ribosomal RNA small subunit methyltransferase G of Pseudomonas entomophila (strain L48).